We begin with the raw amino-acid sequence, 397 residues long: Tryptophan synthase beta chain (397 aa).

Lysine 88 carries the N6-(pyridoxal phosphate)lysine modification.

The protein belongs to the TrpB family. As to quaternary structure, tetramer of two alpha and two beta chains. Pyridoxal 5'-phosphate serves as cofactor.

The enzyme catalyses (1S,2R)-1-C-(indol-3-yl)glycerol 3-phosphate + L-serine = D-glyceraldehyde 3-phosphate + L-tryptophan + H2O. The protein operates within amino-acid biosynthesis; L-tryptophan biosynthesis; L-tryptophan from chorismate: step 5/5. In terms of biological role, the beta subunit is responsible for the synthesis of L-tryptophan from indole and L-serine. This is Tryptophan synthase beta chain from Shewanella amazonensis (strain ATCC BAA-1098 / SB2B).